Here is a 1063-residue protein sequence, read N- to C-terminus: ATP-dependent helicase hrq1 (1063 aa).

The interval 224-243 (TQSRKNQPVPPDSPSIPNDS) is disordered. The Helicase ATP-binding domain occupies 320-503 (INHLWNGFHV…KIFGVDNIKL (184 aa)). An ATP-binding site is contributed by 333-340 (TSTSSGKS). The DEAH box signature appears at 444–447 (DEAH). In terms of domain architecture, Helicase C-terminal spans 539 to 717 (EASKLLIKFA…ELPINIRSDE (179 aa)).

This sequence belongs to the helicase family. HRQ1 subfamily. In terms of assembly, forms heptamer rings. Interacts with rhp14. Mg(2+) serves as cofactor.

Its subcellular location is the nucleus. It carries out the reaction Couples ATP hydrolysis with the unwinding of duplex DNA by translocating in the 3'-5' direction.. It catalyses the reaction ATP + H2O = ADP + phosphate + H(+). Helicase with 3'-5' helicase activity involved in genome stability. Functions in the nucleotide excision repair (NER) pathway and plays a critical role in DNA interstrand cross-link repair. Unwinds relatively long duplex DNA up to 120-bp and requires a long 3'-tail of at least 70 nucleotides for efficient unwinding of duplex DNA. Shows both processive helicase and DNA strand annealing activities. Affects telomere length by a non-catalytic mechanism, probably through inhibiting telomerase by competing with it for ssDNA binding. This is ATP-dependent helicase hrq1 from Schizosaccharomyces pombe (strain 972 / ATCC 24843) (Fission yeast).